We begin with the raw amino-acid sequence, 408 residues long: UDP-glucose 4-epimerase 2 (408 aa).

An NAD(+)-binding site is contributed by 13–44 (TVLVTGGAGYIGSHAVLQLLLAGFRAVVVDNL). Ser-138 provides a ligand contact to substrate. Tyr-162 (proton acceptor) is an active-site residue. The disordered stretch occupies residues 369–408 (GSPKQNGHCTNGFSESTRHNGHNGYGLVDSAKHNGNGHFH). Over residues 370-383 (SPKQNGHCTNGFSE) the composition is skewed to polar residues.

Belongs to the NAD(P)-dependent epimerase/dehydratase family. The cofactor is NAD(+).

The enzyme catalyses UDP-alpha-D-glucose = UDP-alpha-D-galactose. It functions in the pathway carbohydrate metabolism; galactose metabolism. Functionally, catalyzes the interconversion between UDP-glucose and UDP-galactose. This Oryza sativa subsp. japonica (Rice) protein is UDP-glucose 4-epimerase 2 (UGE-2).